Here is a 91-residue protein sequence, read N- to C-terminus: MSITKERKQQLIKEYAITENDTGSSAVQCAILTERINNLTEHFKSNHKDHTSRRGLLVLVGRRRRLLNYIKKNSLSEYLDLISKLGIRKVK.

This sequence belongs to the universal ribosomal protein uS15 family. As to quaternary structure, part of the 30S ribosomal subunit. Forms a bridge to the 50S subunit in the 70S ribosome, contacting the 23S rRNA.

In terms of biological role, one of the primary rRNA binding proteins, it binds directly to 16S rRNA where it helps nucleate assembly of the platform of the 30S subunit by binding and bridging several RNA helices of the 16S rRNA. Functionally, forms an intersubunit bridge (bridge B4) with the 23S rRNA of the 50S subunit in the ribosome. The polypeptide is Small ribosomal subunit protein uS15 (Rickettsia akari (strain Hartford)).